The chain runs to 237 residues: DCN1-like protein 5 (237 aa).

Residues Ser-9, Ser-41, and Ser-48 each carry the phosphoserine modification. Residues 46-232 (FSSKKCLAWF…LLDEFVEWQK (187 aa)) form the DCUN1 domain.

As to quaternary structure, part of a complex that contains DCUN1D5, CUL1 and RBX1; this interaction is bridged by CUL1. Interacts (via the DCUN1 domain) with the unneddylated cullins: interacts with CUL1, CUL2, CUL3, CUL4A, CUL4B and CUL5; these interactions promote the cullin neddylation and the identity of the cullin dictates the affinity of the interaction. Interacts (via DCUN1 domain) with UBE2M (N-terminally acetylated form) and probably with UBE2F (N-terminally acetylated form). May also interact with regulators or subunits of cullin-RING ligases such as RBX1, RNF7, ELOB and DDB1; these interactions are bridged by cullins. Interacts with CAND1; this interaction is bridged by cullins and strongly inhibits the neddylation of cullins. These CAND-cullin-DCNL complexes can only be neddylated in the presence of a substrate adapter. In terms of processing, phosphorylation at Ser-41 is independent of cullin's interaction. Phosphorylated in response to both TICAM1 and MYD88 dependent Toll-like receptor (TLR) pathway activation. Phosphorylated in response to IL1B stimulation. Weakly expressed in testis, skin and immune tissues (thymus, spleen and lymph nodes).

Its subcellular location is the nucleus. The protein resides in the cytoplasm. It is found in the cytoskeleton. It localises to the spindle. Its function is as follows. Contributes to the neddylation of all cullins by transferring NEDD8 from N-terminally acetylated NEDD8-conjugating E2s enzyme to different cullin C-terminal domain-RBX complexes which is necessary for the activation of cullin-RING E3 ubiquitin ligases (CRLs). May play a role in DNA damage response and may participate in cell proliferation and anchorage-independent cell growth. The chain is DCN1-like protein 5 from Homo sapiens (Human).